The chain runs to 821 residues: Zinc finger protein 41 (821 aa).

The interval 1–55 is disordered; that stretch reads MAANGDSPPWSPALAAEGRGSSCEVRRERTPEARIHSVKRYPDLSPGPKGRSSAD. The segment covering 24–35 has biased composition (basic and acidic residues); the sequence is EVRRERTPEARI. The region spanning 69 to 140 is the KRAB domain; sequence VSFEDVTVDF…EGEAPHQSCS (72 aa). Lysine 120 participates in a covalent cross-link: Glycyl lysine isopeptide (Lys-Gly) (interchain with G-Cter in SUMO2). The C2H2-type 1 zinc finger occupies 313 to 335; sequence YVCTECVMGFTQKSHLFEHQRIH. The C2H2-type 2; degenerate zinc finger occupies 341-364; that stretch reads RECDKSNKVFPQKPQVDVHPSVYT. C2H2-type zinc fingers lie at residues 369–391, 397–419, 425–447, 453–475, 481–503, 509–531, 537–559, 565–587, 593–615, and 621–643; these read YLCTQCGKVFTLKSNLITHQKIH, YKCSECGKAFFQRSDLFRHLRIH, YECSECGKGFSQNSDLSIHQKTH, YECNECGKAFTRKSALRMHQRIH, YVCADCGKAFIQKSHFNTHQRIH, YECSDCGKSFTKKSQLHVHQRIH, YICTECGKVFTHRTNLTTHQKTH, YMCAECGKAFTDQSNLIKHQKTH, YKCNGCGKAFIWKSRLKIHQKSH, and YECKDCGKAFIQKSTLSVHQRIH. Lysine 647 is covalently cross-linked (Glycyl lysine isopeptide (Lys-Gly) (interchain with G-Cter in SUMO2)). 6 C2H2-type zinc fingers span residues 649–671, 677–699, 705–727, 733–755, 761–783, and 789–811; these read YVCPECGKAFIQKSHFIAHHRIH, YECSDCGKCFTKKSQLRVHQKIH, NICAECGKAFTDRSNLITHQKIH, YECGDCGKTFTWKSRLNIHQKSH, YECSKCGKAFIQKATLSMHQIIH, and YACTECQKAFTDRSNLIKHQKMH.

Belongs to the krueppel C2H2-type zinc-finger protein family. As to expression, expressed in the heart, brain, placenta, lung, liver, skeletal muscle, kidney and pancreas.

The protein resides in the nucleus. Functionally, may be involved in transcriptional regulation. The protein is Zinc finger protein 41 (ZNF41) of Homo sapiens (Human).